Consider the following 222-residue polypeptide: Putative RING finger protein ORF118 (222 aa).

The RING-type zinc-finger motif lies at 78–114 (CCICMAKNNRKEALPCQHNVCRDCYYKPMRNNCPVCN). A disordered region spans residues 184–222 (IENRIHNNNNNNYDENNPDDLPVIHPPRRRHRQTAHISI). The span at 189–198 (HNNNNNNYDE) shows a compositional bias: low complexity. Over residues 209-222 (PPRRRHRQTAHISI) the composition is skewed to basic residues.

The polypeptide is Putative RING finger protein ORF118 (Magallana gigas (Pacific oyster)).